The following is a 325-amino-acid chain: S-adenosylmethionine carrier 1, chloroplastic/mitochondrial (325 aa).

The N-terminal 38 residues, 1–38 (MAPLTLSVDVKSSSATSHDVSKRVMQSSQLKINKGFFA), are a transit peptide targeting the chloroplast and mitochondrion. Solcar repeat units lie at residues 52-124 (RTLF…TKQK), 133-215 (LSAV…LCLG), and 228-310 (ENAL…TKRT). 5 helical membrane passes run 55-75 (FEGF…LYPI), 97-117 (YSGL…FVGV), 132-152 (HLSA…ASLI), 230-250 (ALIG…LDVI), and 285-305 (GIGP…GVLE).

Belongs to the mitochondrial carrier (TC 2.A.29) family. Expressed in seedlings, cotyledons, leaves and flowers. Lower levels of expression in stems and roots. Not detected in senescent leaves, petals and pollen grains.

It is found in the mitochondrion membrane. The protein resides in the plastid. It localises to the chloroplast membrane. Its activity is regulated as follows. Inhibited strongly by tannic acid, bromocresol purple, mercuric chloride, mersalyl, p-hydroxymercuribenzoate, S-adenosylhomocysteine, S-adenosylcysteine and adenosylornithine, and to a lesser extent by N-ethylmaleimide, bathophenanthroline and pyridoxal-5'-P. In terms of biological role, transporter involved in exchange reactions through membranes. Has a low uniporter activity. Specifically mediates the transport of S-adenosylmethionine (SAM) and its closest analogs. Probably involved in the uptake of SAM in exchange for S-adenosylhomocysteine (SAHC), which is produced from SAM in the mitochondrial matrix and plastidial stroma by methyltransferase activities. This Arabidopsis thaliana (Mouse-ear cress) protein is S-adenosylmethionine carrier 1, chloroplastic/mitochondrial (SAMC1).